We begin with the raw amino-acid sequence, 465 residues long: Branched-chain amino acid permease BcaP (465 aa).

13 helical membrane passes run 35-55 (LLGI…TGAV), 57-77 (AGPG…FAAL), 103-123 (LMAF…VSAV), 133-153 (SFLS…PGAV), 159-179 (LFNL…YLGI), 188-208 (IMVI…AVYV), 216-236 (FMPM…FAFI), 258-278 (GIIF…AIMT), 305-325 (VAGI…LVML), 355-375 (PYVA…LVPL), 380-400 (KLVN…VIVL), 413-432 (CPGV…FLIL), and 437-456 (VTIV…YFLY).

The protein belongs to the amino acid-polyamine-organocation (APC) superfamily.

Its subcellular location is the cell membrane. Its activity is regulated as follows. Isoleucine uptake is efficiently reduced in the presence of 100-fold excess valine, leucine, alanine, threonine, serine, cysteine, asparagine, and a nonproteinaceous amino acid 4-azaleucine. In terms of biological role, branched-chain amino acid transport system which is involved in the uptake of isoleucine, valine and probably leucine. Can also transport threonine, and is active as a minor serine permease. May be an amino acid permease of rather broad specificity, because several amino acids, albeit at 100-fold excess, are able to prevent isoleucine uptake. Probably does not transport methionine. Together with BraB and BrnQ, plays an important role in the activation of CodY, a branched-chain amino acid-responsive transcriptional regulator that controls the expression of several dozen transcription units in B.subtilis. The chain is Branched-chain amino acid permease BcaP from Bacillus subtilis (strain 168).